Consider the following 343-residue polypeptide: MQIGNFNTDKKVFIIAELSANHAGSLEMALKSIKAAKKAGADAIKIQTYTPDSLTLNSDKEDFIIKGGLWDKRKLYELYESAKTPYEWHSQIFETAQNEGILCFSSPFAKEDVEFLKRFDPIAYKIASFEANDENFVRLIAKEKKPTIVSTGIATEEELFKICEIFKEEKNPDLVFLKCTSTYPTAIEDMNLKGIVSLKEKFNVEVGLSDHSFGFLAPVMAVALGARVIEKHFMLDKSIESEDSKFSLDFDEFKAMVDAVRQAESALGDGKLDLDEKVLKNRVFARSLYASKDIKKGEMFSEENVKSVRPSFGLHPKFYQELLGKKASKDIKFGDALKQGDFQ.

Positions 287–343 constitute an AFP-like domain; it reads SLYASKDIKKGEMFSEENVKSVRPSFGLHPKFYQELLGKKASKDIKFGDALKQGDFQ.

Belongs to the pseudaminic acid synthase family. It depends on a divalent metal cation as a cofactor.

The catalysed reaction is 2,4-diacetamido-2,4,6-trideoxy-beta-L-altrose + phosphoenolpyruvate + H2O = pseudaminate + phosphate. In terms of biological role, catalyzes the fifth step in the biosynthesis of pseudaminic acid, a sialic-acid-like sugar that is used to modify flagellin. Catalyzes the condensation of phosphoenolpyruvate with 2,4-diacetamido-2,4,6-trideoxy-beta-l-altropyranose, forming pseudaminic acid. This Campylobacter jejuni subsp. jejuni serotype O:2 (strain ATCC 700819 / NCTC 11168) protein is Pseudaminic acid synthase (pseI).